Consider the following 432-residue polypeptide: Enolase 2 (432 aa).

(2R)-2-phosphoglycerate is bound at residue Q163. The active-site Proton donor is E205. The Mg(2+) site is built by D242, E287, and D314. K339, R368, S369, and K390 together coordinate (2R)-2-phosphoglycerate. K339 serves as the catalytic Proton acceptor.

The protein belongs to the enolase family. As to quaternary structure, homodimer. Probably forms octamers. The cofactor is Mg(2+).

It is found in the cytoplasm. The protein localises to the secreted. Its subcellular location is the cell surface. The catalysed reaction is (2R)-2-phosphoglycerate = phosphoenolpyruvate + H2O. Its pathway is carbohydrate degradation; glycolysis; pyruvate from D-glyceraldehyde 3-phosphate: step 4/5. In terms of biological role, catalyzes the reversible conversion of 2-phosphoglycerate (2-PG) into phosphoenolpyruvate (PEP). It is essential for the degradation of carbohydrates via glycolysis. The chain is Enolase 2 from Lactobacillus gasseri (strain ATCC 33323 / DSM 20243 / BCRC 14619 / CIP 102991 / JCM 1131 / KCTC 3163 / NCIMB 11718 / NCTC 13722 / AM63).